Consider the following 211-residue polypeptide: Uracil phosphoribosyltransferase (211 aa).

5-phospho-alpha-D-ribose 1-diphosphate contacts are provided by residues Arg-78, Arg-103, and 130 to 138; that span reads DPMLATGGT. Uracil contacts are provided by residues Ile-196 and 201-203; that span reads GDA. A 5-phospho-alpha-D-ribose 1-diphosphate-binding site is contributed by Asp-202.

It belongs to the UPRTase family. The cofactor is Mg(2+).

The catalysed reaction is UMP + diphosphate = 5-phospho-alpha-D-ribose 1-diphosphate + uracil. The protein operates within pyrimidine metabolism; UMP biosynthesis via salvage pathway; UMP from uracil: step 1/1. Allosterically activated by GTP. In terms of biological role, catalyzes the conversion of uracil and 5-phospho-alpha-D-ribose 1-diphosphate (PRPP) to UMP and diphosphate. This is Uracil phosphoribosyltransferase from Beutenbergia cavernae (strain ATCC BAA-8 / DSM 12333 / CCUG 43141 / JCM 11478 / NBRC 16432 / NCIMB 13614 / HKI 0122).